We begin with the raw amino-acid sequence, 343 residues long: ATP-dependent (S)-NAD(P)H-hydrate dehydratase (343 aa).

The N-terminal 42 residues, 1-42, are a transit peptide targeting the mitochondrion; that stretch reads MAVHACGAAAAVVALLSAAIALQWSPLYAVLQRALSLHTAHA. A YjeF C-terminal domain is found at 49–340; it reads LFQLVRNIVP…TEVGTAFSRL (292 aa). Residue Lys63 is modified to N6-acetyllysine. Tyr81 is modified (phosphotyrosine). (6S)-NADPHX contacts are provided by residues Gly149 and 202-208; that span reads NHVEFSR. Ser216 carries the post-translational modification Phosphoserine. ATP contacts are provided by residues 242-246 and 261-270; these read KGEQD and GSSRRCGGQG. Asp271 provides a ligand contact to (6S)-NADPHX.

The protein belongs to the NnrD/CARKD family. Mg(2+) serves as cofactor.

The protein resides in the mitochondrion. It catalyses the reaction (6S)-NADHX + ATP = ADP + phosphate + NADH + H(+). The enzyme catalyses (6S)-NADPHX + ATP = ADP + phosphate + NADPH + H(+). Its function is as follows. Catalyzes the dehydration of the S-form of NAD(P)HX at the expense of ATP, which is converted to ADP. Together with NAD(P)HX epimerase, which catalyzes the epimerization of the S- and R-forms, the enzyme allows the repair of both epimers of NAD(P)HX, a damaged form of NAD(P)H that is a result of enzymatic or heat-dependent hydration. This is ATP-dependent (S)-NAD(P)H-hydrate dehydratase from Mus musculus (Mouse).